Consider the following 326-residue polypeptide: tRNA N6-adenosine threonylcarbamoyltransferase (326 aa).

Histidine 113 and histidine 117 together coordinate Fe cation. Substrate is bound by residues 134 to 138 (VASGG), aspartate 167, glycine 180, and asparagine 267. Residue aspartate 291 coordinates Fe cation.

Belongs to the KAE1 / TsaD family. The cofactor is Fe(2+).

Its subcellular location is the cytoplasm. It carries out the reaction L-threonylcarbamoyladenylate + adenosine(37) in tRNA = N(6)-L-threonylcarbamoyladenosine(37) in tRNA + AMP + H(+). Functionally, required for the formation of a threonylcarbamoyl group on adenosine at position 37 (t(6)A37) in tRNAs that read codons beginning with adenine. Is involved in the transfer of the threonylcarbamoyl moiety of threonylcarbamoyl-AMP (TC-AMP) to the N6 group of A37, together with TsaE and TsaB. TsaD likely plays a direct catalytic role in this reaction. This chain is tRNA N6-adenosine threonylcarbamoyltransferase, found in Thermus thermophilus (strain ATCC 27634 / DSM 579 / HB8).